The following is a 239-amino-acid chain: mRNA turnover protein 4 homolog (239 aa).

Residues 216 to 239 form a disordered region; it reads QQMDDDLPESAPESEGESEEEDDS. The span at 218–239 shows a compositional bias: acidic residues; it reads MDDDLPESAPESEGESEEEDDS. Phosphoserine is present on residues Ser-225, Ser-229, and Ser-233.

The protein belongs to the universal ribosomal protein uL10 family. Associates with the pre-60S ribosomal particle. Interacts with MINAS-60 (product of an alternative open reading frame of RBM10).

The protein resides in the nucleus. Its subcellular location is the nucleolus. It localises to the cytoplasm. Component of the ribosome assembly machinery. Nuclear paralog of the ribosomal protein P0, it binds pre-60S subunits at an early stage of assembly in the nucleolus, and is replaced by P0 in cytoplasmic pre-60S subunits and mature 80S ribosomes. The chain is mRNA turnover protein 4 homolog (Mrto4) from Mus musculus (Mouse).